We begin with the raw amino-acid sequence, 107 residues long: ATP-dependent Clp protease adapter protein ClpS (107 aa).

Basic and acidic residues predominate over residues 1 to 12 (MSGDKDFDKDSD). The tract at residues 1–21 (MSGDKDFDKDSDVTVITRTTP) is disordered.

Belongs to the ClpS family. As to quaternary structure, binds to the N-terminal domain of the chaperone ClpA.

In terms of biological role, involved in the modulation of the specificity of the ClpAP-mediated ATP-dependent protein degradation. The sequence is that of ATP-dependent Clp protease adapter protein ClpS from Zymomonas mobilis subsp. mobilis (strain ATCC 31821 / ZM4 / CP4).